A 152-amino-acid chain; its full sequence is uncharacterized protein (152 aa).

The protein localises to the mitochondrion. This is an uncharacterized protein from Arabidopsis thaliana (Mouse-ear cress).